Consider the following 543-residue polypeptide: Heparanase (543 aa).

The first 35 residues, 1-35, serve as a signal peptide directing secretion; that stretch reads MLLRSKPALPPPLMLLLLGPLGPLSPGALPRPAQA. Residues 62-64 and Thr97 contribute to the heparan sulfate group site; that span reads DAN. Residues 110-157 constitute a propeptide, linker peptide; that stretch reads STFEERSYWQSQVNQDICKYGSIPPDVEEKLRLEWPYQEQLLLREHYQ. Cys127 and Cys179 form a disulfide bridge. 158–162 is a heparan sulfate group binding site; that stretch reads KKFKN. N-linked (GlcNAc...) asparagine glycans are attached at residues Asn162, Asn178, Asn200, and Asn217. Glu225 (proton donor) is an active-site residue. The N-linked (GlcNAc...) asparagine glycan is linked to Asn238. Residues 270-280, His296, and Arg303 contribute to the heparan sulfate group site; that span reads QPRRKTAKMLK. The interval 288–417 is required for heterodimerization with the heparanase 8 kDa subunit; that stretch reads EVIDSVTWHH…LLFKKLVGTK (130 aa). Glu343 serves as the catalytic Nucleophile. Heparan sulfate group is bound by residues 348 to 350 and 389 to 391; these read YGG and GNY. An intrachain disulfide couples Cys437 to Cys542. Residue Asn459 is glycosylated (N-linked (GlcNAc...) asparagine). The tract at residues 527–543 is required for transferring proheparanase to the Golgi apparatus, secretion and subsequent enzyme activity and for enhancement of PKB/AKT1 phosphorylation; that stretch reads FSYSFFVIRNAKVAACI.

It belongs to the glycosyl hydrolase 79 family. As to quaternary structure, heterodimer; heterodimer formation between the 8 kDa and the 50 kDa subunits is required for enzyme activity. Interacts with TF; the interaction, inhibited by heparin, enhances the generation of activated factor X and activates coagulation. Interacts with HRG; the interaction is enhanced at acidic pH, partially inhibits binding of HPSE to cell surface receptors and modulates its enzymatic activity. Interacts with SDC1; the interaction enhances the shedding of SDC1. Interacts with HPSE2. Post-translationally, proteolytically processed. The cleavage of the 65 kDa form leads to the generation of a linker peptide, and 8 kDa and 50 kDa products. The active form, the 8/50 kDa heterodimer, is resistant to degradation. Complete removal of the linker peptide appears to be a prerequisite to the complete activation of the enzyme. In terms of processing, N-glycosylated. Glycosylation of the 50 kDa subunit appears to be essential for its solubility. Highly expressed in placenta and spleen and weakly expressed in lymph node, thymus, peripheral blood leukocytes, bone marrow, endothelial cells, fetal liver and tumor tissues. Also expressed in hair follicles, specifically in both Henle's and Huxley's layers of inner the root sheath (IRS) at anagen phase.

Its subcellular location is the lysosome membrane. The protein localises to the secreted. The protein resides in the nucleus. The enzyme catalyses endohydrolysis of (1-&gt;4)-beta-D-glycosidic bonds of heparan sulfate chains in heparan sulfate proteoglycan.. Its activity is regulated as follows. Inhibited by EDTA, laminarin sulfate and, to a lower extent, by heparin and sulfamin and activated by calcium and magnesium. Endoglycosidase that cleaves heparan sulfate proteoglycans (HSPGs) into heparan sulfate side chains and core proteoglycans. Participates in extracellular matrix (ECM) degradation and remodeling. Selectively cleaves the linkage between a glucuronic acid unit and an N-sulfo glucosamine unit carrying either a 3-O-sulfo or a 6-O-sulfo group. Can also cleave the linkage between a glucuronic acid unit and an N-sulfo glucosamine unit carrying a 2-O-sulfo group, but not linkages between a glucuronic acid unit and a 2-O-sulfated iduronic acid moiety. It is essentially inactive at neutral pH but becomes active under acidic conditions such as during tumor invasion and in inflammatory processes. Facilitates cell migration associated with metastasis, wound healing and inflammation. Enhances shedding of syndecans, and increases endothelial invasion and angiogenesis in myelomas. Acts as a procoagulant by increasing the generation of activation factor X in the presence of tissue factor and activation factor VII. Increases cell adhesion to the extracellular matrix (ECM), independent of its enzymatic activity. Induces AKT1/PKB phosphorylation via lipid rafts increasing cell mobility and invasion. Heparin increases this AKT1/PKB activation. Regulates osteogenesis. Enhances angiogenesis through up-regulation of SRC-mediated activation of VEGF. Implicated in hair follicle inner root sheath differentiation and hair homeostasis. The chain is Heparanase (HPSE) from Homo sapiens (Human).